The primary structure comprises 60 residues: Large ribosomal subunit protein bL32 (60 aa).

It belongs to the bacterial ribosomal protein bL32 family.

In Latilactobacillus sakei subsp. sakei (strain 23K) (Lactobacillus sakei subsp. sakei), this protein is Large ribosomal subunit protein bL32.